We begin with the raw amino-acid sequence, 156 residues long: MPRRRLIGQRKILPDPKLGSERLAKFINILMKNGKKSLAETIVYSALEIIAKRSGKNYLEAFEAALDNVRPAIEVKSRRVGGSTYQVPVEVRSIRRDTLAMRWIVEAARKRSDKSMAIRLANELVDATEHKGAAVKKREEVHRMADANKAFAHYRW.

Belongs to the universal ribosomal protein uS7 family. Part of the 30S ribosomal subunit. Contacts proteins S9 and S11.

Functionally, one of the primary rRNA binding proteins, it binds directly to 16S rRNA where it nucleates assembly of the head domain of the 30S subunit. Is located at the subunit interface close to the decoding center, probably blocks exit of the E-site tRNA. The sequence is that of Small ribosomal subunit protein uS7 from Baumannia cicadellinicola subsp. Homalodisca coagulata.